The sequence spans 122 residues: Phospholipase A2 nigroviriditoxin basic subunit B (122 aa).

7 cysteine pairs are disulfide-bonded: cysteine 26–cysteine 115, cysteine 28–cysteine 44, cysteine 43–cysteine 95, cysteine 49–cysteine 122, cysteine 50–cysteine 88, cysteine 57–cysteine 81, and cysteine 75–cysteine 86. Residues tyrosine 27, glycine 29, and glycine 31 each contribute to the Ca(2+) site. Histidine 47 is a catalytic residue. Residue aspartate 48 coordinates Ca(2+). Residue aspartate 89 is part of the active site.

The protein belongs to the phospholipase A2 family. Group II subfamily. D49 sub-subfamily. Nigroviriditoxin is a heterodimer of an acidic subunit A and a basic subunit B. The cofactor is Ca(2+). In terms of tissue distribution, expressed by the venom gland.

It localises to the secreted. It carries out the reaction a 1,2-diacyl-sn-glycero-3-phosphocholine + H2O = a 1-acyl-sn-glycero-3-phosphocholine + a fatty acid + H(+). Heterodimer A-B: Nigroviriditoxin possesses phospholipase A2 (PLA2) activity. It consists of a non-covalent association of a basic PLA2 subunit B with a non-enzymatic subunit A. Its function is as follows. Subunit B: Snake venom phospholipase A2 (PLA2) that induces myonecrosis in mice. PLA2 catalyzes the calcium-dependent hydrolysis of the 2-acyl groups in 3-sn-phosphoglycerides. This Bothriechis nigroviridis (Black-speckled palm pit viper) protein is Phospholipase A2 nigroviriditoxin basic subunit B.